The primary structure comprises 252 residues: MTQAASAAPSWSIDPADVARFSAIAAEWWDPKGKFAPLHVFNPCRLAFIREQALARFDRDGAARAPFEGLTLLDIGCGGGLLSEPMARLGFAVTAIDASEKNIKTAATHAAEQGLDIGYRPATAEQLLAEGAGPFDVVLTMEVIEHVADPGEFLRTCAKLLKPGGIMFVATLNRTLKALALAKIGAEYVLRWVPPGTHDWKQFLKPEELRAFLAGEPVAMQGPFGVAYNPLTGRWSRSSDTDINYMMTVTKD.

4 residues coordinate S-adenosyl-L-methionine: Arg-45, Gly-76, Asp-97, and Met-141.

It belongs to the methyltransferase superfamily. UbiG/COQ3 family.

The enzyme catalyses a 3-demethylubiquinol + S-adenosyl-L-methionine = a ubiquinol + S-adenosyl-L-homocysteine + H(+). It catalyses the reaction a 3-(all-trans-polyprenyl)benzene-1,2-diol + S-adenosyl-L-methionine = a 2-methoxy-6-(all-trans-polyprenyl)phenol + S-adenosyl-L-homocysteine + H(+). It participates in cofactor biosynthesis; ubiquinone biosynthesis. Its function is as follows. O-methyltransferase that catalyzes the 2 O-methylation steps in the ubiquinone biosynthetic pathway. The protein is Ubiquinone biosynthesis O-methyltransferase of Caulobacter vibrioides (strain ATCC 19089 / CIP 103742 / CB 15) (Caulobacter crescentus).